The chain runs to 163 residues: Low molecular weight protein-tyrosine phosphatase A (163 aa).

C11 functions as the Nucleophile in the catalytic mechanism. The active site involves R17. D126 functions as the Proton donor in the catalytic mechanism.

Belongs to the low molecular weight phosphotyrosine protein phosphatase family.

It catalyses the reaction O-phospho-L-tyrosyl-[protein] + H2O = L-tyrosyl-[protein] + phosphate. Key virulence factor required for mycobacterial survival within host macrophages. Exhibits protein tyrosine phosphatase activity. Its function is as follows. Supports mycobacteria survival during infection by modulation of the phagosome maturation and modulation of the normal host signaling pathways, including host innate immune responses and cell apoptosis. The sequence is that of Low molecular weight protein-tyrosine phosphatase A (ptpA) from Mycobacterium bovis (strain ATCC BAA-935 / AF2122/97).